The following is a 276-amino-acid chain: Undecaprenyl-diphosphatase (276 aa).

The next 6 membrane-spanning stretches (helical) occupy residues 43–63 (RAMA…VWEF), 85–105 (INLL…ADLI), 109–129 (LFNP…MLWA), 184–204 (ATEF…VYSG), 218–238 (VFAI…KGLL), and 254–274 (IAFG…WTAA).

This sequence belongs to the UppP family.

It is found in the cell inner membrane. The catalysed reaction is di-trans,octa-cis-undecaprenyl diphosphate + H2O = di-trans,octa-cis-undecaprenyl phosphate + phosphate + H(+). Its function is as follows. Catalyzes the dephosphorylation of undecaprenyl diphosphate (UPP). Confers resistance to bacitracin. This chain is Undecaprenyl-diphosphatase, found in Pseudomonas fluorescens (strain ATCC BAA-477 / NRRL B-23932 / Pf-5).